A 279-amino-acid polypeptide reads, in one-letter code: Protein gustavus (279 aa).

One can recognise a B30.2/SPRY domain in the interval Pro-36 to Asp-233. In terms of domain architecture, SOCS box spans Pro-234–Arg-279. The tract at residues Pro-236 to Arg-279 is involved in binding to the Elongin BC complex.

The protein belongs to the SPSB family. As to quaternary structure, interacts (via B30.2/SPRY domain) with vas; this interaction may be necessary for the transport of vas to the posterior pole of the oocyte. Interacts with Cul-5. May associate with the Elongin BC complex composed of Elongin-B and Elongin-C. As to expression, expressed in ovaries, primarily in nurse cells and oocytes (at protein level).

The protein resides in the cytoplasm. It is found in the nucleus. In terms of biological role, involved in the localization of vas to the posterior pole of the oocyte. Required maternally in the germ line for efficient primordial germ cell formation. The sequence is that of Protein gustavus (gus) from Drosophila melanogaster (Fruit fly).